A 287-amino-acid polypeptide reads, in one-letter code: Cell wall protein PIR5 (287 aa).

The N-terminal stretch at 1–21 is a signal peptide; sequence MHYKKAFLASLLSSIALTAYA. The propeptide occupies 22 to 62; the sequence is PPEPWATLTPSSKMDGGTTEYRTSFGLAVIPFTVTESKVKR. 4 PIR1/2/3 repeats span residues 62–80, 81–99, 104–122, and 144–162; these read RNVISQINDGQVQVTTQKL, PHPVSQIGDGQIQVTTQKV, SHIVSQIGDGQLQITTAKN, and ATAVSQIHDGQVQVTISSA.

This sequence belongs to the PIR protein family. Covalently linked to beta-1,3-glucan of the inner cell wall layer via an alkali-sensitive ester linkage between the gamma-carboxyl group of glutamic acids, arising from specific glutamines within the PIR1/2/3 repeats, and hydroxyl groups of glucoses of beta-1,3-glucan chains.

It localises to the secreted. The protein localises to the cell wall. In terms of biological role, component of the outer cell wall layer. May be involved in meiosis and sporulation. This chain is Cell wall protein PIR5 (PIR5), found in Saccharomyces cerevisiae (strain RM11-1a) (Baker's yeast).